Here is a 274-residue protein sequence, read N- to C-terminus: 2,3,4,5-tetrahydropyridine-2,6-dicarboxylate N-succinyltransferase (274 aa).

This sequence belongs to the transferase hexapeptide repeat family.

The protein resides in the cytoplasm. The enzyme catalyses (S)-2,3,4,5-tetrahydrodipicolinate + succinyl-CoA + H2O = (S)-2-succinylamino-6-oxoheptanedioate + CoA. Its pathway is amino-acid biosynthesis; L-lysine biosynthesis via DAP pathway; LL-2,6-diaminopimelate from (S)-tetrahydrodipicolinate (succinylase route): step 1/3. This Delftia acidovorans (strain DSM 14801 / SPH-1) protein is 2,3,4,5-tetrahydropyridine-2,6-dicarboxylate N-succinyltransferase.